Here is a 198-residue protein sequence, read N- to C-terminus: Transcription factor LBX2 (198 aa).

Disordered stretches follow at residues 24 to 46 (MVPR…SPLC), 63 to 89 (ALQP…RKSR), and 173 to 198 (DPGL…QVDD). A DNA-binding region (homeobox) is located at residues 85-144 (RRKSRTAFTAQQVLELERRFVFQKYLAPSERDGLATRLGLANAQVVTWFQNRRAKLKRDV).

The protein localises to the nucleus. Functionally, transcription factor. The polypeptide is Transcription factor LBX2 (LBX2) (Homo sapiens (Human)).